Consider the following 347-residue polypeptide: 5-deoxyribose 1-phosphate isomerase (347 aa).

Residues 48 to 50, Arg-91, and Gln-198 contribute to the substrate site; that span reads RGA. Residue Asp-239 is the Proton donor of the active site. 249–250 contributes to the substrate binding site; it reads NK.

This sequence belongs to the EIF-2B alpha/beta/delta subunits family. DrdI subfamily.

It carries out the reaction 5-deoxy-alpha-D-ribose 1-phosphate = 5-deoxy-D-ribulose 1-phosphate. It functions in the pathway carbohydrate degradation. Catalyzes the isomerization of 5-deoxy-alpha-D-ribose 1-phosphate to 5-deoxy-D-ribulose 1-phosphate, as part of a 5-deoxyribose salvage pathway that recycles this toxic radical SAM enzyme by-product to mainstream metabolites. This chain is 5-deoxyribose 1-phosphate isomerase, found in Bacillus cereus (strain ATCC 14579 / DSM 31 / CCUG 7414 / JCM 2152 / NBRC 15305 / NCIMB 9373 / NCTC 2599 / NRRL B-3711).